Here is a 215-residue protein sequence, read N- to C-terminus: Glutathione S-transferase F10 (215 aa).

Residues 2–81 (VLTIYAPLFA…YIAEKYRSQG (80 aa)) enclose the GST N-terminal domain. Glutathione contacts are provided by residues 11–12 (AS), 39–40 (QR), 52–53 (KI), and 65–66 (ES). Positions 88 to 215 (TIEERGQVEQ…EVSAKYSLPV (128 aa)) constitute a GST C-terminal domain.

The protein belongs to the GST superfamily. Phi family. As to quaternary structure, interacts with BAK1. Expressed in roots, stems, floral buds, mature flowers and leaves.

It is found in the cytoplasm. The protein localises to the cytosol. The enzyme catalyses RX + glutathione = an S-substituted glutathione + a halide anion + H(+). Its function is as follows. In vitro, possesses glutathione S-transferase activity toward 1-chloro-2,4-dinitrobenzene (CDNB) and benzyl isothiocyanate (BITC). May be involved in the conjugation of reduced glutathione to a wide number of exogenous and endogenous hydrophobic electrophiles and have a detoxification role against certain herbicides. The sequence is that of Glutathione S-transferase F10 from Arabidopsis thaliana (Mouse-ear cress).